The sequence spans 156 residues: Small ribosomal subunit protein uS7 (156 aa).

This sequence belongs to the universal ribosomal protein uS7 family. In terms of assembly, part of the 30S ribosomal subunit. Contacts proteins S9 and S11.

One of the primary rRNA binding proteins, it binds directly to 16S rRNA where it nucleates assembly of the head domain of the 30S subunit. Is located at the subunit interface close to the decoding center, probably blocks exit of the E-site tRNA. The sequence is that of Small ribosomal subunit protein uS7 from Desulfovibrio desulfuricans (strain ATCC 27774 / DSM 6949 / MB).